The chain runs to 441 residues: Endothelin receptor type B (441 aa).

A signal peptide spans 1–26 (MQPPPSLCGLALLALVLACGMAEVWG). The Extracellular portion of the chain corresponds to 27–100 (EEREMPSAPA…RPTEIKDTFK (74 aa)). A disordered region spans residues 30 to 90 (EMPSAPATPP…APRRTPPPCQ (61 aa)). A compositionally biased stretch (polar residues) spans 47–65 (LTPSTKTSWPRDSNASLPR). Asparagine 60 carries an N-linked (GlcNAc...) asparagine glycan. A helical transmembrane segment spans residues 101-125 (YINTVVSCLVFVLGIIGNSTLLRII). Residues 126-136 (YKNKCMRNGPN) lie on the Cytoplasmic side of the membrane. Residues 137-162 (ILIASLALGDLLHIIIDIPINVYKLL) traverse the membrane as a helical segment. Topologically, residues 163-174 (AEDWPFGAEMCK) are extracellular. The cysteines at positions 173 and 254 are disulfide-linked. The chain crosses the membrane as a helical span at residues 175-196 (LVPFIQKASVGITVLSLCALSI). Over 197–217 (DRYRAVASWSRIKGIGVPKWT) the chain is Cytoplasmic. A helical membrane pass occupies residues 218–242 (AVEIVLIWVVSVILAVPEAIGFNLV). Residues 243 to 270 (TIDYKGSYLRICLLNPTQKTAFMQFYKT) are Extracellular-facing. A helical transmembrane segment spans residues 271-295 (AKDWWLFSFYFCLPLAITAFFYTLM). At 296–323 (TCEMLRKKSGMQIALNDHLKQRREVAKT) the chain is on the cytoplasmic side. At serine 304 the chain carries Phosphoserine. A helical membrane pass occupies residues 324 to 349 (VFCLVLVFGLCWLALHLSRILKLTLY). At 350–361 (DQNDPNRCELLS) the chain is on the extracellular side. The helical transmembrane segment at 362-388 (FLLVLDYIGINMASLNSCINPIALYLV) threads the bilayer. Topologically, residues 389–441 (SKRFKNCFKSCLCCWCQSFEEKQSLEEKQSCLKFKANDHGYDNFRSSNKYSSS) are cytoplasmic. Residues cysteine 402 and cysteine 404 are each lipidated (S-palmitoyl cysteine). Residue serine 418 is modified to Phosphoserine. At tyrosine 438 the chain carries Phosphotyrosine. Serine 439, serine 440, and serine 441 each carry phosphoserine.

Belongs to the G-protein coupled receptor 1 family. Endothelin receptor subfamily. EDNRB sub-subfamily.

The protein resides in the cell membrane. In terms of biological role, non-specific receptor for endothelin 1, 2, and 3. Mediates its action by association with G proteins that activate a phosphatidylinositol-calcium second messenger system. In Oryctolagus cuniculus (Rabbit), this protein is Endothelin receptor type B (EDNRB).